Reading from the N-terminus, the 395-residue chain is Phosphopentomutase (395 aa).

Residues Asp-16, Asp-289, His-294, Asp-330, His-331, and His-342 each coordinate Mn(2+).

This sequence belongs to the phosphopentomutase family. The cofactor is Mn(2+).

The protein resides in the cytoplasm. It carries out the reaction 2-deoxy-alpha-D-ribose 1-phosphate = 2-deoxy-D-ribose 5-phosphate. It catalyses the reaction alpha-D-ribose 1-phosphate = D-ribose 5-phosphate. The protein operates within carbohydrate degradation; 2-deoxy-D-ribose 1-phosphate degradation; D-glyceraldehyde 3-phosphate and acetaldehyde from 2-deoxy-alpha-D-ribose 1-phosphate: step 1/2. Isomerase that catalyzes the conversion of deoxy-ribose 1-phosphate (dRib-1-P) and ribose 1-phosphate (Rib-1-P) to deoxy-ribose 5-phosphate (dRib-5-P) and ribose 5-phosphate (Rib-5-P), respectively. The chain is Phosphopentomutase from Geobacillus kaustophilus (strain HTA426).